The sequence spans 373 residues: Superinfection exclusion protein (373 aa).

A signal peptide spans methionine 1–threonine 15.

Belongs to the serpin family. Orthopoxvirus OPG040 subfamily. As to quaternary structure, interacts with A56 protein.

The protein resides in the virion membrane. It is found in the host cell membrane. Prevents cell to cell fusion via its interaction with A56 protein. The A56-K2 complex associates with components of the entry fusion complex (EFC) presumably to avoid superinfection and syncytium formation. The polypeptide is Superinfection exclusion protein (OPG040) (Homo sapiens (Human)).